A 465-amino-acid polypeptide reads, in one-letter code: Glutamyl-tRNA reductase 2 (465 aa).

Substrate contacts are provided by residues 62–65 (TCNR), Ser-122, 127–129 (EGQ), and Gln-133. Cys-63 (nucleophile) is an active-site residue. 204–209 (GAGKMG) provides a ligand contact to NADP(+).

It belongs to the glutamyl-tRNA reductase family.

The protein resides in the plastid. It localises to the chloroplast. It carries out the reaction (S)-4-amino-5-oxopentanoate + tRNA(Glu) + NADP(+) = L-glutamyl-tRNA(Glu) + NADPH + H(+). It participates in porphyrin-containing compound metabolism; protoporphyrin-IX biosynthesis; 5-aminolevulinate from L-glutamyl-tRNA(Glu): step 1/2. Catalyzes the NADPH-dependent reduction of glutamyl-tRNA(Glu) to glutamate 1-semialdehyde (GSA). This is Glutamyl-tRNA reductase 2 (HEMA2) from Hordeum vulgare (Barley).